We begin with the raw amino-acid sequence, 1332 residues long: DNA-directed RNA polymerase subunit beta' (1332 aa).

Residues C60, C62, C75, and C78 each coordinate Zn(2+). Mg(2+) is bound by residues D535, D537, and D539. 4 residues coordinate Zn(2+): C894, C977, C984, and C987.

The protein belongs to the RNA polymerase beta' chain family. In terms of assembly, the RNAP catalytic core consists of 2 alpha, 1 beta, 1 beta' and 1 omega subunit. When a sigma factor is associated with the core the holoenzyme is formed, which can initiate transcription. Requires Mg(2+) as cofactor. Zn(2+) serves as cofactor.

The enzyme catalyses RNA(n) + a ribonucleoside 5'-triphosphate = RNA(n+1) + diphosphate. In terms of biological role, DNA-dependent RNA polymerase catalyzes the transcription of DNA into RNA using the four ribonucleoside triphosphates as substrates. The polypeptide is DNA-directed RNA polymerase subunit beta' (Corynebacterium kroppenstedtii (strain DSM 44385 / JCM 11950 / CIP 105744 / CCUG 35717)).